A 479-amino-acid polypeptide reads, in one-letter code: RHO1 GEF localizing protein 1 (479 aa).

The segment at serine 460–glutamine 479 is disordered.

Regulator of RHO1 signaling that acts as a cofactor required for the efficient localization of the TUS1 GTP exchange factor (GEF) for RHO1 to the bud neck during all phases of cytokinesis. RHO1 is a key, essential hub protein in the cell wall integrity (CWI) pathway in which activated RHO1-GTP binds directly to and activates multiple different downstream effectors required for cell wall synthesis and actin assembly during cytokinesis. The chain is RHO1 GEF localizing protein 1 from Saccharomyces cerevisiae (strain ATCC 204508 / S288c) (Baker's yeast).